A 275-amino-acid chain; its full sequence is Large ribosomal subunit protein uL2 (275 aa).

Residues 212-275 (NRHRGIRPQT…DKLIISRRKK (64 aa)) are disordered. Residues 257 to 275 (YKTRRKKPSDKLIISRRKK) are compositionally biased toward basic residues.

It belongs to the universal ribosomal protein uL2 family. Part of the 50S ribosomal subunit. Forms a bridge to the 30S subunit in the 70S ribosome.

Its function is as follows. One of the primary rRNA binding proteins. Required for association of the 30S and 50S subunits to form the 70S ribosome, for tRNA binding and peptide bond formation. It has been suggested to have peptidyltransferase activity; this is somewhat controversial. Makes several contacts with the 16S rRNA in the 70S ribosome. This is Large ribosomal subunit protein uL2 from Nitratiruptor sp. (strain SB155-2).